A 143-amino-acid chain; its full sequence is Rheacalcin-2 (143 aa).

Cystine bridges form between Cys-6/Cys-17, Cys-34/Cys-139, and Cys-114/Cys-131. Residues 13-140 (FDGRCFGFFP…CSDRKPFICE (128 aa)) form the C-type lectin domain. Ser-66 and Ser-68 each carry phosphoserine.

It localises to the secreted. It is found in the extracellular space. The protein resides in the extracellular matrix. In Rhea americana (Greater rhea), this protein is Rheacalcin-2.